The following is a 367-amino-acid chain: tRNA/tmRNA (uracil-C(5))-methyltransferase (367 aa).

S-adenosyl-L-methionine contacts are provided by Gln-190, Tyr-218, Asn-223, Glu-239, and Asp-299. Residue Cys-324 is the Nucleophile of the active site. The active-site Proton acceptor is Glu-358.

The protein belongs to the class I-like SAM-binding methyltransferase superfamily. RNA M5U methyltransferase family. TrmA subfamily.

The catalysed reaction is uridine(54) in tRNA + S-adenosyl-L-methionine = 5-methyluridine(54) in tRNA + S-adenosyl-L-homocysteine + H(+). It catalyses the reaction uridine(341) in tmRNA + S-adenosyl-L-methionine = 5-methyluridine(341) in tmRNA + S-adenosyl-L-homocysteine + H(+). Functionally, dual-specificity methyltransferase that catalyzes the formation of 5-methyluridine at position 54 (m5U54) in all tRNAs, and that of position 341 (m5U341) in tmRNA (transfer-mRNA). In Erwinia tasmaniensis (strain DSM 17950 / CFBP 7177 / CIP 109463 / NCPPB 4357 / Et1/99), this protein is tRNA/tmRNA (uracil-C(5))-methyltransferase.